The chain runs to 443 residues: Oxygen-dependent coproporphyrinogen-III oxidase, mitochondrial (443 aa).

The transit peptide at 1–98 (MALRLGRLGS…EMVPKSSGAR (98 aa)) directs the protein to the mitochondrion. Residues 89–112 (EMVPKSSGARSPSPGRREEDGDEL) form a disordered region. The residue at position 101 (Ser-101) is a Phosphoserine. The span at 103 to 112 (GRREEDGDEL) shows a compositional bias: basic and acidic residues. The segment at 182–191 (VLQDGRVFEK) is important for dimerization. Ser-233 serves as a coordination point for coproporphyrinogen III. His-247 acts as the Proton donor in catalysis. A coproporphyrinogen III-binding site is contributed by 249–251 (NYR). An important for dimerization region spans residues 381–417 (YVEFNLLYDRGTKFGLFTPGSRIESILMSLPLTARWE). The residue at position 393 (Lys-393) is an N6-acetyllysine; alternate. Position 393 is an N6-succinyllysine; alternate (Lys-393). 400 to 402 (GSR) contacts coproporphyrinogen III.

The protein belongs to the aerobic coproporphyrinogen-III oxidase family. In terms of assembly, homodimer. In terms of tissue distribution, expressed in erythroid cells. Expressed in liver.

It localises to the mitochondrion intermembrane space. The catalysed reaction is coproporphyrinogen III + O2 + 2 H(+) = protoporphyrinogen IX + 2 CO2 + 2 H2O. Its pathway is porphyrin-containing compound metabolism; protoporphyrin-IX biosynthesis; protoporphyrinogen-IX from coproporphyrinogen-III (O2 route): step 1/1. In terms of biological role, involved in the heme biosynthesis. Catalyzes the aerobic oxidative decarboxylation of propionate groups of rings A and B of coproporphyrinogen-III to yield the vinyl groups in protoporphyrinogen-IX. This is Oxygen-dependent coproporphyrinogen-III oxidase, mitochondrial (Cpox) from Mus musculus (Mouse).